The following is a 307-amino-acid chain: UDP-3-O-acyl-N-acetylglucosamine deacetylase (307 aa).

Residues His78, His241, and Asp245 each coordinate Zn(2+). His268 functions as the Proton donor in the catalytic mechanism.

This sequence belongs to the LpxC family. It depends on Zn(2+) as a cofactor.

It catalyses the reaction a UDP-3-O-[(3R)-3-hydroxyacyl]-N-acetyl-alpha-D-glucosamine + H2O = a UDP-3-O-[(3R)-3-hydroxyacyl]-alpha-D-glucosamine + acetate. It functions in the pathway glycolipid biosynthesis; lipid IV(A) biosynthesis; lipid IV(A) from (3R)-3-hydroxytetradecanoyl-[acyl-carrier-protein] and UDP-N-acetyl-alpha-D-glucosamine: step 2/6. In terms of biological role, catalyzes the hydrolysis of UDP-3-O-myristoyl-N-acetylglucosamine to form UDP-3-O-myristoylglucosamine and acetate, the committed step in lipid A biosynthesis. The chain is UDP-3-O-acyl-N-acetylglucosamine deacetylase from Delftia acidovorans (strain DSM 14801 / SPH-1).